The following is a 610-amino-acid chain: UvrABC system protein C (610 aa).

The 79-residue stretch at 16 to 94 (SQPGVYRMYD…IKLYQPRYNV (79 aa)) folds into the GIY-YIG domain. Residues 204–239 (DQVLTQLIARMEKASQDLAFEEAARIRDQIQAVRRV) enclose the UVR domain.

Belongs to the UvrC family. Interacts with UvrB in an incision complex.

The protein localises to the cytoplasm. In terms of biological role, the UvrABC repair system catalyzes the recognition and processing of DNA lesions. UvrC both incises the 5' and 3' sides of the lesion. The N-terminal half is responsible for the 3' incision and the C-terminal half is responsible for the 5' incision. The polypeptide is UvrABC system protein C (Salmonella typhi).